The primary structure comprises 366 residues: Growth hormone secretagogue receptor type 1 (366 aa).

The Extracellular segment spans residues 1-40 (MWNATPSEEPGSNLTRAELGWDAPPGNDSLADELLQLFPA). N-linked (GlcNAc...) asparagine glycans are attached at residues Asn-13 and Asn-27. The helical transmembrane segment at 41–66 (PLLAGVTATCVALFVVGIAGNLLTML) threads the bilayer. Residues 67–72 (VVSRFR) are Cytoplasmic-facing. Residues 73 to 96 (ELRTTTNLYLSSMAFSDLLIFLCM) traverse the membrane as a helical segment. The Extracellular segment spans residues 97–117 (PLDLVRLWQYRPWNFGDLLCK). A disulfide bond links Cys-116 and Cys-198. A helical membrane pass occupies residues 118–139 (LFQFVSESCTYATVLTITALSV). At 140-162 (ERYFAICFPLRAKVVVTKGRVKL) the chain is on the cytoplasmic side. A helical transmembrane segment spans residues 163–183 (VILVIWALAFCSAGPIFVLVG). Residues 184 to 211 (VEHENGTDPQDTNECRATEFAVRSGLLT) are Extracellular-facing. N-linked (GlcNAc...) asparagine glycosylation is present at Asn-188. Residues 212–235 (IMVWVSSVFFFLPVFCLTVLYSLI) form a helical membrane-spanning segment. Topologically, residues 236–263 (GRKLWRRKRGDGAVGSSLRDQNHRQTVK) are cytoplasmic. The helical transmembrane segment at 264–285 (MLAVVVFAFILCWLPFHVGRYL) threads the bilayer. Over 286-302 (FSKSFEPGSLEIAQISQ) the chain is Extracellular. The chain crosses the membrane as a helical span at residues 303 to 326 (YCNLVSFVLFYLSAAINPILYNIM). The Cytoplasmic segment spans residues 327–366 (SKKYRVAVFKLLGFEPFSQRKLSTLKDESSRAWTKSSINT).

The protein belongs to the G-protein coupled receptor 1 family.

It localises to the cell membrane. Its function is as follows. Receptor for ghrelin, coupled to G-alpha-11 proteins. Stimulates growth hormone secretion. Also binds other growth hormone releasing peptides (GHRP) (e.g. Met-enkephalin and GHRP-6) as well as non-peptide, low molecular weight secretagogues (e.g. L-692,429, MK-0677, adenosine). The chain is Growth hormone secretagogue receptor type 1 (GHSR) from Oryctolagus cuniculus (Rabbit).